The sequence spans 259 residues: Deoxyribose-phosphate aldolase (259 aa).

Asp104 (proton donor/acceptor) is an active-site residue. Lys168 (schiff-base intermediate with acetaldehyde) is an active-site residue. The Proton donor/acceptor role is filled by Lys200.

Belongs to the DeoC/FbaB aldolase family. DeoC type 2 subfamily.

Its subcellular location is the cytoplasm. It catalyses the reaction 2-deoxy-D-ribose 5-phosphate = D-glyceraldehyde 3-phosphate + acetaldehyde. It functions in the pathway carbohydrate degradation; 2-deoxy-D-ribose 1-phosphate degradation; D-glyceraldehyde 3-phosphate and acetaldehyde from 2-deoxy-alpha-D-ribose 1-phosphate: step 2/2. Catalyzes a reversible aldol reaction between acetaldehyde and D-glyceraldehyde 3-phosphate to generate 2-deoxy-D-ribose 5-phosphate. The chain is Deoxyribose-phosphate aldolase from Agrobacterium fabrum (strain C58 / ATCC 33970) (Agrobacterium tumefaciens (strain C58)).